Reading from the N-terminus, the 711-residue chain is Retrovirus-related Pol polyprotein from type-1 retrotransposable element R2 (711 aa).

In terms of domain architecture, Reverse transcriptase spans 45–323 (LHLLRGHVPT…QTFRYLGHFF (279 aa)). Residues 444-711 (LFSCPSFDHL…RAVWSRQAGA (268 aa)) form a nucleic acid-binding endonuclease region.

It catalyses the reaction DNA(n) + a 2'-deoxyribonucleoside 5'-triphosphate = DNA(n+1) + diphosphate. This Popillia japonica (Japanese beetle) protein is Retrovirus-related Pol polyprotein from type-1 retrotransposable element R2.